The sequence spans 205 residues: Adenylyl-sulfate kinase (205 aa).

Gly31–Ser38 is an ATP binding site. Catalysis depends on Ser105, which acts as the Phosphoserine intermediate.

Belongs to the APS kinase family.

The catalysed reaction is adenosine 5'-phosphosulfate + ATP = 3'-phosphoadenylyl sulfate + ADP + H(+). Its pathway is sulfur metabolism; hydrogen sulfide biosynthesis; sulfite from sulfate: step 2/3. Functionally, catalyzes the synthesis of activated sulfate. In Shewanella baltica (strain OS195), this protein is Adenylyl-sulfate kinase.